The following is a 101-amino-acid chain: Small ribosomal subunit protein uS10 (101 aa).

The protein belongs to the universal ribosomal protein uS10 family. In terms of assembly, part of the 30S ribosomal subunit.

Involved in the binding of tRNA to the ribosomes. The protein is Small ribosomal subunit protein uS10 of Corynebacterium urealyticum (strain ATCC 43042 / DSM 7109).